Reading from the N-terminus, the 293-residue chain is Lipoyl synthase (293 aa).

The [4Fe-4S] cluster site is built by C47, C52, C58, C73, C77, C80, and S285. The region spanning 59 to 274 is the Radical SAM core domain; sequence WSEGTATFMI…EKIGLELGFR (216 aa).

This sequence belongs to the radical SAM superfamily. Lipoyl synthase family. Requires [4Fe-4S] cluster as cofactor.

Its subcellular location is the cytoplasm. The catalysed reaction is [[Fe-S] cluster scaffold protein carrying a second [4Fe-4S](2+) cluster] + N(6)-octanoyl-L-lysyl-[protein] + 2 oxidized [2Fe-2S]-[ferredoxin] + 2 S-adenosyl-L-methionine + 4 H(+) = [[Fe-S] cluster scaffold protein] + N(6)-[(R)-dihydrolipoyl]-L-lysyl-[protein] + 4 Fe(3+) + 2 hydrogen sulfide + 2 5'-deoxyadenosine + 2 L-methionine + 2 reduced [2Fe-2S]-[ferredoxin]. It participates in protein modification; protein lipoylation via endogenous pathway; protein N(6)-(lipoyl)lysine from octanoyl-[acyl-carrier-protein]: step 2/2. Its function is as follows. Catalyzes the radical-mediated insertion of two sulfur atoms into the C-6 and C-8 positions of the octanoyl moiety bound to the lipoyl domains of lipoate-dependent enzymes, thereby converting the octanoylated domains into lipoylated derivatives. This chain is Lipoyl synthase, found in Christiangramia forsetii (strain DSM 17595 / CGMCC 1.15422 / KT0803) (Gramella forsetii).